A 397-amino-acid chain; its full sequence is Digeranylgeranylglycerophospholipid reductase 1 (397 aa).

Alanine 18, aspartate 37, cysteine 48, alanine 49, glycine 51, arginine 104, alanine 128, aspartate 284, glycine 296, and isoleucine 297 together coordinate FAD.

Belongs to the geranylgeranyl reductase family. DGGGPL reductase subfamily. FAD serves as cofactor.

It catalyses the reaction a 2,3-bis-O-phytanyl-sn-glycerol 1-phospholipid + 8 A = a 2,3-bis-O-(geranylgeranyl)-sn-glycerol 1-phospholipid + 8 AH2. It carries out the reaction 2,3-bis-O-(phytanyl)-sn-glycerol 1-phosphate + 8 A = 2,3-bis-O-(geranylgeranyl)-sn-glycerol 1-phosphate + 8 AH2. The enzyme catalyses CDP-2,3-bis-O-(geranylgeranyl)-sn-glycerol + 8 AH2 = CDP-2,3-bis-O-(phytanyl)-sn-glycerol + 8 A. The catalysed reaction is archaetidylserine + 8 AH2 = 2,3-bis-O-phytanyl-sn-glycero-3-phospho-L-serine + 8 A. Its pathway is membrane lipid metabolism; glycerophospholipid metabolism. In terms of biological role, is involved in the reduction of 2,3-digeranylgeranylglycerophospholipids (unsaturated archaeols) into 2,3-diphytanylglycerophospholipids (saturated archaeols) in the biosynthesis of archaeal membrane lipids. Catalyzes the formation of archaetidic acid (2,3-di-O-phytanyl-sn-glyceryl phosphate) from 2,3-di-O-geranylgeranylglyceryl phosphate (DGGGP) via the hydrogenation of each double bond of the isoprenoid chains. Is also probably able to reduce double bonds of geranyl groups in CDP-2,3-bis-O-(geranylgeranyl)-sn-glycerol and archaetidylserine, thus acting at various stages in the biosynthesis of archaeal membrane lipids. This chain is Digeranylgeranylglycerophospholipid reductase 1, found in Methanothermobacter thermautotrophicus (strain ATCC 29096 / DSM 1053 / JCM 10044 / NBRC 100330 / Delta H) (Methanobacterium thermoautotrophicum).